The following is a 149-amino-acid chain: Ribonuclease H (149 aa).

One can recognise an RNase H type-1 domain in the interval 1–142 (MSDSVELFTD…ADQLANRGVD (142 aa)). Residues Asp-10, Glu-48, Asp-70, and Asp-134 each contribute to the Mg(2+) site.

Belongs to the RNase H family. Monomer. It depends on Mg(2+) as a cofactor.

It localises to the cytoplasm. It carries out the reaction Endonucleolytic cleavage to 5'-phosphomonoester.. Its function is as follows. Endonuclease that specifically degrades the RNA of RNA-DNA hybrids. The sequence is that of Ribonuclease H from Pseudomonas savastanoi pv. phaseolicola (strain 1448A / Race 6) (Pseudomonas syringae pv. phaseolicola (strain 1448A / Race 6)).